A 600-amino-acid chain; its full sequence is Aspartate--tRNA(Asp/Asn) ligase (600 aa).

Glu175 is an L-aspartate binding site. Residues 199 to 202 (QLFK) are aspartate. Position 221 (Arg221) interacts with L-aspartate. Residues 221-223 (RDE) and Gln230 contribute to the ATP site. Position 453 (His453) interacts with L-aspartate. Glu487 serves as a coordination point for ATP. Arg494 serves as a coordination point for L-aspartate. 539–542 (GWDR) contacts ATP. Residues 564–600 (GGVDPLTDAPAPITPLQRKESGIDAKPKAAENKPEEK) are disordered. Positions 580-600 (QRKESGIDAKPKAAENKPEEK) are enriched in basic and acidic residues.

It belongs to the class-II aminoacyl-tRNA synthetase family. Type 1 subfamily. Homodimer.

It localises to the cytoplasm. It carries out the reaction tRNA(Asx) + L-aspartate + ATP = L-aspartyl-tRNA(Asx) + AMP + diphosphate. Aspartyl-tRNA synthetase with relaxed tRNA specificity since it is able to aspartylate not only its cognate tRNA(Asp) but also tRNA(Asn). Reaction proceeds in two steps: L-aspartate is first activated by ATP to form Asp-AMP and then transferred to the acceptor end of tRNA(Asp/Asn). The protein is Aspartate--tRNA(Asp/Asn) ligase of Corynebacterium efficiens (strain DSM 44549 / YS-314 / AJ 12310 / JCM 11189 / NBRC 100395).